We begin with the raw amino-acid sequence, 371 residues long: uncharacterized protein (371 aa).

It belongs to the Gfo/Idh/MocA family.

This is an uncharacterized protein from Synechocystis sp. (strain ATCC 27184 / PCC 6803 / Kazusa).